A 331-amino-acid chain; its full sequence is Protein REVEILLE 6 (331 aa).

Residues 67–121 (TITKSRESWTEPEHDKFLEALQLFDRDWKKIEAFIGSKTVIQIRSHAQKYFLKVQ) enclose the HTH myb-type domain. Residues 94 to 117 (WKKIEAFIGSKTVIQIRSHAQKYF) constitute a DNA-binding region (H-T-H motif). Disordered regions lie at residues 122 to 166 (KSGT…EPND), 203 to 237 (LPKAGAGANNNCSSSSENTPRPRSNRDARDHGNVG), and 309 to 331 (SETATDHGGVNKTLNKDPPEIST). The span at 150–165 (VQLQVPGSFKSTSEPN) shows a compositional bias: polar residues. The segment covering 211–220 (NNNCSSSSEN) has biased composition (low complexity). 2 stretches are compositionally biased toward basic and acidic residues: residues 226 to 235 (SNRDARDHGN) and 322 to 331 (LNKDPPEIST).

The protein localises to the nucleus. Functionally, probable transcription factor. RVE4, RVE6 and RVE8 are components of the circadian system acting synergistically to regulate flowering time, redundantly to regulate leaf growth, and antagonistically to regulate hypocotyl elongation; their action seems independent of ZTL and HY5. This chain is Protein REVEILLE 6, found in Arabidopsis thaliana (Mouse-ear cress).